The chain runs to 580 residues: Protein O-linked-mannose beta-1,4-N-acetylglucosaminyltransferase 2 (580 aa).

Residues 1–4 (MHLS) lie on the Cytoplasmic side of the membrane. A helical; Signal-anchor for type II membrane protein transmembrane segment spans residues 5–25 (AVLNALLVSVLAAVLWKHVRL). Residues 26 to 580 (REHAASLEEE…PFADVLVCST (555 aa)) lie on the Lumenal side of the membrane. N-linked (GlcNAc...) asparagine glycans are attached at residues Asn99 and Asn276. The Fibronectin type-III domain maps to 488-580 (ARCQASVQGA…PFADVLVCST (93 aa)).

Belongs to the glycosyltransferase 61 family.

It localises to the endoplasmic reticulum membrane. It catalyses the reaction 3-O-(alpha-D-mannosyl)-L-threonyl-[protein] + UDP-N-acetyl-alpha-D-glucosamine = 3-O-(N-acetyl-beta-D-glucosaminyl-(1-&gt;4)-alpha-D-mannosyl)-L-threonyl-[protein] + UDP + H(+). It participates in protein modification; protein glycosylation. Its function is as follows. O-linked mannose beta-1,4-N-acetylglucosaminyltransferase that transfers UDP-N-acetyl-D-glucosamine to the 4-position of the mannose to generate N-acetyl-D-glucosamine-beta-1,4-O-D-mannosylprotein. Involved in the biosynthesis of the phosphorylated O-mannosyl trisaccharide (N-acetylgalactosamine-beta-3-N-acetylglucosamine-beta-4-(phosphate-6-)mannose), a carbohydrate structure present in alpha-dystroglycan (DAG1), which is required for binding laminin G-like domain-containing extracellular proteins with high affinity. The chain is Protein O-linked-mannose beta-1,4-N-acetylglucosaminyltransferase 2 (POMGNT2) from Bos taurus (Bovine).